Here is a 404-residue protein sequence, read N- to C-terminus: NADH-quinone oxidoreductase subunit D 2 (404 aa).

The protein belongs to the complex I 49 kDa subunit family. In terms of assembly, NDH-1 is composed of 14 different subunits. Subunits NuoB, C, D, E, F, and G constitute the peripheral sector of the complex.

Its subcellular location is the cell inner membrane. The enzyme catalyses a quinone + NADH + 5 H(+)(in) = a quinol + NAD(+) + 4 H(+)(out). In terms of biological role, NDH-1 shuttles electrons from NADH, via FMN and iron-sulfur (Fe-S) centers, to quinones in the respiratory chain. The immediate electron acceptor for the enzyme in this species is believed to be ubiquinone. Couples the redox reaction to proton translocation (for every two electrons transferred, four hydrogen ions are translocated across the cytoplasmic membrane), and thus conserves the redox energy in a proton gradient. The sequence is that of NADH-quinone oxidoreductase subunit D 2 from Rhizobium etli (strain ATCC 51251 / DSM 11541 / JCM 21823 / NBRC 15573 / CFN 42).